Consider the following 586-residue polypeptide: Proline--tRNA ligase (586 aa).

This sequence belongs to the class-II aminoacyl-tRNA synthetase family. ProS type 1 subfamily. In terms of assembly, homodimer.

The protein localises to the cytoplasm. It catalyses the reaction tRNA(Pro) + L-proline + ATP = L-prolyl-tRNA(Pro) + AMP + diphosphate. Catalyzes the attachment of proline to tRNA(Pro) in a two-step reaction: proline is first activated by ATP to form Pro-AMP and then transferred to the acceptor end of tRNA(Pro). As ProRS can inadvertently accommodate and process non-cognate amino acids such as alanine and cysteine, to avoid such errors it has two additional distinct editing activities against alanine. One activity is designated as 'pretransfer' editing and involves the tRNA(Pro)-independent hydrolysis of activated Ala-AMP. The other activity is designated 'posttransfer' editing and involves deacylation of mischarged Ala-tRNA(Pro). The misacylated Cys-tRNA(Pro) is not edited by ProRS. In Leptospira biflexa serovar Patoc (strain Patoc 1 / Ames), this protein is Proline--tRNA ligase.